We begin with the raw amino-acid sequence, 311 residues long: Cell division protein FtsQ (311 aa).

The tract at residues Met-1 to Pro-28 is disordered. The Cytoplasmic portion of the chain corresponds to Met-1–Lys-46. A helical membrane pass occupies residues Ala-47–Asp-67. Topologically, residues Glu-68–Gly-311 are periplasmic. Positions Phe-91–Arg-159 constitute a POTRA domain.

It belongs to the FtsQ/DivIB family. FtsQ subfamily.

The protein resides in the cell inner membrane. Essential cell division protein. This chain is Cell division protein FtsQ, found in Jannaschia sp. (strain CCS1).